The primary structure comprises 603 residues: Glutathione-regulated potassium-efflux system protein KefB (603 aa).

Transmembrane regions (helical) follow at residues 5–25 (ALLT…PIAA), 29–49 (IGAV…GLGF), 55–75 (AILH…GLEL), 87–107 (IFGV…GALY), 115–135 (SALI…LQLM), 152–172 (VLLF…ILAG), 180–202 (WERI…YLVR), 207–227 (FIAA…LVLG), 230–250 (LFME…GILL), 268–288 (GLLL…GILY), 291–311 (IVKI…VLYF), 326–346 (FAGV…AAAS), and 356–376 (PLLL…MQLI). In terms of domain architecture, RCK N-terminal spans 400–521 (EPQVIVVGFG…VRHFSRETFS (122 aa)).

The protein belongs to the monovalent cation:proton antiporter 2 (CPA2) transporter (TC 2.A.37) family. KefB subfamily. Interacts with the regulatory subunit KefG.

It is found in the cell inner membrane. Its function is as follows. Pore-forming subunit of a potassium efflux system that confers protection against electrophiles. Catalyzes K(+)/H(+) antiport. The polypeptide is Glutathione-regulated potassium-efflux system protein KefB (Pectobacterium carotovorum subsp. carotovorum (strain PC1)).